The following is a 552-amino-acid chain: FERRY endosomal RAB5 effector complex subunit 3 (552 aa).

Ser-79 bears the Phosphoserine mark.

As to quaternary structure, component of the FERRY complex composed of five subunits, TBCK, PPP1R21, FERRY3, CRYZL1 and GATD1 with a ratio of 1:2:1:2:4, respectively.

It localises to the cytoplasm. The protein resides in the early endosome. Its function is as follows. Component of the FERRY complex (Five-subunit Endosomal Rab5 and RNA/ribosome intermediary). The FERRY complex directly interacts with mRNAs and RAB5A, and functions as a RAB5A effector involved in the localization and the distribution of specific mRNAs most likely by mediating their endosomal transport. The complex recruits mRNAs and ribosomes to early endosomes through direct mRNA-interaction. Plays a role in mast cell degranulation. The polypeptide is FERRY endosomal RAB5 effector complex subunit 3 (Mus musculus (Mouse)).